The following is a 475-amino-acid chain: Aspartyl/glutamyl-tRNA(Asn/Gln) amidotransferase subunit B (475 aa).

This sequence belongs to the GatB/GatE family. GatB subfamily. Heterotrimer of A, B and C subunits.

It carries out the reaction L-glutamyl-tRNA(Gln) + L-glutamine + ATP + H2O = L-glutaminyl-tRNA(Gln) + L-glutamate + ADP + phosphate + H(+). It catalyses the reaction L-aspartyl-tRNA(Asn) + L-glutamine + ATP + H2O = L-asparaginyl-tRNA(Asn) + L-glutamate + ADP + phosphate + 2 H(+). Its function is as follows. Allows the formation of correctly charged Asn-tRNA(Asn) or Gln-tRNA(Gln) through the transamidation of misacylated Asp-tRNA(Asn) or Glu-tRNA(Gln) in organisms which lack either or both of asparaginyl-tRNA or glutaminyl-tRNA synthetases. The reaction takes place in the presence of glutamine and ATP through an activated phospho-Asp-tRNA(Asn) or phospho-Glu-tRNA(Gln). This chain is Aspartyl/glutamyl-tRNA(Asn/Gln) amidotransferase subunit B, found in Thermoanaerobacter pseudethanolicus (strain ATCC 33223 / 39E) (Clostridium thermohydrosulfuricum).